Reading from the N-terminus, the 55-residue chain is Ferredoxin-1 (55 aa).

4Fe-4S ferredoxin-type domains are found at residues 2-27 and 28-55; these read YKIEETCISCGACAAECPVNAIEQGD and TIFVVNADTCIDCGNCANVCPVGAPVAE. The [4Fe-4S] cluster site is built by Cys-8, Cys-11, Cys-14, Cys-18, Cys-37, Cys-40, Cys-43, and Cys-47.

[4Fe-4S] cluster serves as cofactor.

Functionally, ferredoxins are iron-sulfur proteins that transfer electrons in a wide variety of metabolic reactions. The sequence is that of Ferredoxin-1 from Rhodospirillum rubrum.